We begin with the raw amino-acid sequence, 403 residues long: Semaphorin-like protein A39 (403 aa).

Positions 1-14 (MIPLLFILFYFANG) are cleaved as a signal peptide. The Sema domain occupies 15 to 403 (IEWHKFETSE…MPQMKKILKM (389 aa)).

It belongs to the semaphorin family. Interacts with host VESPR.

It is found in the secreted. Functionally, acts as a semaphorin-like protein and binds to host plexin C1 receptor. May alter the movement of host plexin C1-expressing cells including dendritic cells, monocytes, or granulocytes in the proximity of infected cells. May also regulate host cell cytoskeleton of neighboring cells to improve viral infection. In Homo sapiens (Human), this protein is Semaphorin-like protein A39.